Consider the following 229-residue polypeptide: Sugar fermentation stimulation protein homolog (229 aa).

The protein belongs to the SfsA family.

This Clostridium novyi (strain NT) protein is Sugar fermentation stimulation protein homolog.